The chain runs to 276 residues: NADPH-dependent 7-cyano-7-deazaguanine reductase (276 aa).

Position 83 to 85 (Ile83 to Ser85) interacts with substrate. Ser85–Lys86 provides a ligand contact to NADPH. Cys184 (thioimide intermediate) is an active-site residue. Asp191 functions as the Proton donor in the catalytic mechanism. His223–Glu224 provides a ligand contact to substrate. Arg252 to Gly253 is an NADPH binding site.

Belongs to the GTP cyclohydrolase I family. QueF type 2 subfamily. Homodimer.

It is found in the cytoplasm. It catalyses the reaction 7-aminomethyl-7-carbaguanine + 2 NADP(+) = 7-cyano-7-deazaguanine + 2 NADPH + 3 H(+). The protein operates within tRNA modification; tRNA-queuosine biosynthesis. Its function is as follows. Catalyzes the NADPH-dependent reduction of 7-cyano-7-deazaguanine (preQ0) to 7-aminomethyl-7-deazaguanine (preQ1). The polypeptide is NADPH-dependent 7-cyano-7-deazaguanine reductase (Pseudomonas fluorescens (strain ATCC BAA-477 / NRRL B-23932 / Pf-5)).